The primary structure comprises 1697 residues: UDP-sugar-dependent glycosyltransferase 52 (1697 aa).

2 disordered regions span residues 20–40 (HSDSLSSVGSSSNRSNSNYEN) and 142–166 (STDLSNIKTTTTTTTTTTPPPLMIP). The PH domain occupies 234–332 (DYVLENYLYK…WYHEINRMQK (99 aa)). 2 disordered regions span residues 573–645 (FRSK…TTHE) and 707–756 (PLDK…KQSQ). Low complexity-rich tracts occupy residues 584-628 (QNSQ…SSSA) and 711-722 (QQQQQQQQQQQQ). 2 GRAM domains span residues 658-793 (STFH…TKER) and 881-948 (IKIK…KKYS). Positions 739–749 (TDSDTDSESDF) are enriched in acidic residues. Disordered regions lie at residues 1011–1047 (SPSIASPSITPPSSTPPSSTTPSSTTPTITSPTIHST), 1062–1085 (DGENNSNNNNNNNNTNNTNKSNSF), 1110–1130 (SAQQQQQQQPKTTTTTTSTTT), and 1466–1488 (EHNNNNNNNNNNNNGENSDSNKS). Low complexity-rich tracts occupy residues 1026 to 1047 (PPSSTTPSSTTPTITSPTIHST), 1065 to 1084 (NNSNNNNNNNNTNNTNKSNS), 1112 to 1130 (QQQQQQQPKTTTTTTSTTT), and 1469 to 1479 (NNNNNNNNNNN). The FYVE-type zinc finger occupies 1622 to 1685 (SSAPNSCMGC…VCDKCFNDLQ (64 aa)). The Zn(2+) site is built by C1628, C1631, C1647, C1650, C1655, C1658, C1677, and C1680.

The protein belongs to the glycosyltransferase 28 family.

It catalyses the reaction a sterol + UDP-alpha-D-glucose = a sterol 3-beta-D-glucoside + UDP + H(+). Involved in the biosynthesis of sterol glucoside. Can use different sterols such as cholesterol, sitosterol, and ergosterol as sugar acceptors. In Dictyostelium discoideum (Social amoeba), this protein is UDP-sugar-dependent glycosyltransferase 52 (ugt52).